A 163-amino-acid chain; its full sequence is Nucleotide-binding protein tll0793 (163 aa).

The protein belongs to the YajQ family.

In terms of biological role, nucleotide-binding protein. The protein is Nucleotide-binding protein tll0793 of Thermosynechococcus vestitus (strain NIES-2133 / IAM M-273 / BP-1).